A 724-amino-acid chain; its full sequence is Eukaryotic elongation factor 2 kinase (724 aa).

Residue Ala2 is modified to N-acetylalanine. The disordered stretch occupies residues 11–35 (EGVDGGGSSGAGRHGDSDTDSDDDE). A compositionally biased stretch (gly residues) spans 13 to 22 (VDGGGSSGAG). 4 positions are modified to phosphoserine: Ser18, Ser27, Ser70, and Ser73. Ser77 carries the phosphoserine; by autocatalysis and TRPM7 modification. The tract at residues 80–93 (FKEAWKHAIEKAKH) is calmodulin-binding. The Alpha-type protein kinase domain occupies 115–325 (RYNAVTGEWL…ICQSMGLAPF (211 aa)). Ser242 bears the Phosphoserine mark. 295 to 301 (GDGNLGV) contributes to the ATP binding site. A Phosphothreonine modification is found at Thr347. Position 352 is a phosphothreonine; by autocatalysis (Thr352). Positions 353-476 (EEKCGSPRIR…PESDEDSLGS (124 aa)) are disordered. Ser358 is modified (phosphoserine; by MAPK13 and CDK1). Positions 364-376 (LSGSRPPLLLRLS) are enriched in low complexity. Residues Ser365 and Ser391 each carry the phosphoserine modification. The segment covering 385 to 403 (SDVTFDSLPSSPSSATPHS) has biased composition (polar residues). Ser397 carries the phosphoserine; by AMPK modification. 2 stretches are compositionally biased toward basic and acidic residues: residues 421–435 (GPRDHDRMDNHRDSE) and 444–468 (SEKRSDLDDPEPREHGHSNGNRRPE). Phosphoserine is present on residues Ser434, Ser444, Ser469, Ser473, and Ser476. The residue at position 499 (Ser499) is a Phosphoserine; by PKA.

Belongs to the protein kinase superfamily. Alpha-type protein kinase family. As to quaternary structure, monomer or homodimer. Interacts with Calmodulin/CALM1; this interaction is strictly required for phosphorylation activity. Post-translationally, the N-terminus is blocked. Autophosphorylated at multiple residues, Thr-347 being the major site. Phosphorylated by AMP-activated protein kinase AMPK at Ser-397 leading to EEF2K activation and protein synthesis inhibition. Phosphorylated by TRPM7 at Ser-77 resulting in improved protein stability, higher EE2F phosphorylated and subsequently reduced rate of protein synthesis. Phosphorylation by other kinases such as CDK1 and MAPK13 at Ser-358 or RPS6KA1 and RPS6KB1 at Ser-365 instead decrease EEF2K activity and promote protein synthesis. In terms of tissue distribution, widely expressed, with high levels in reticulocytes and skeletal muscle.

It carries out the reaction [translation elongation factor 2] + ATP = [translation elongation factor 2]-phosphate + ADP + H(+). With respect to regulation, undergoes calcium/calmodulin-dependent intramolecular autophosphorylation, and this results in it becoming partially calcium/calmodulin-independent. In terms of biological role, threonine kinase that regulates protein synthesis by controlling the rate of peptide chain elongation. Upon activation by a variety of upstream kinases including AMPK or TRPM7, phosphorylates the elongation factor EEF2 at a single site, renders it unable to bind ribosomes and thus inactive. In turn, the rate of protein synthesis is reduced. The chain is Eukaryotic elongation factor 2 kinase from Rattus norvegicus (Rat).